Here is a 172-residue protein sequence, read N- to C-terminus: Adenine phosphoribosyltransferase (172 aa).

This sequence belongs to the purine/pyrimidine phosphoribosyltransferase family. As to quaternary structure, homodimer.

It is found in the cytoplasm. The enzyme catalyses AMP + diphosphate = 5-phospho-alpha-D-ribose 1-diphosphate + adenine. Its pathway is purine metabolism; AMP biosynthesis via salvage pathway; AMP from adenine: step 1/1. Its function is as follows. Catalyzes a salvage reaction resulting in the formation of AMP, that is energically less costly than de novo synthesis. This Streptococcus thermophilus (strain ATCC BAA-250 / LMG 18311) protein is Adenine phosphoribosyltransferase.